A 327-amino-acid chain; its full sequence is tRNA N6-adenosine threonylcarbamoyltransferase (327 aa).

Positions 109 and 113 each coordinate Fe cation. Residues M132 to G136, D165, G178, D182, and N268 contribute to the substrate site. D296 is a Fe cation binding site.

It belongs to the KAE1 / TsaD family. In terms of assembly, forms a hexamer composed of two TsaB, TsaD and TsaE trimers. Requires Fe(2+) as cofactor.

It is found in the cytoplasm. It carries out the reaction L-threonylcarbamoyladenylate + adenosine(37) in tRNA = N(6)-L-threonylcarbamoyladenosine(37) in tRNA + AMP + H(+). Required for the formation of a threonylcarbamoyl group on adenosine at position 37 (t(6)A37) in tRNAs that read codons beginning with adenine. Is involved in the transfer of the threonylcarbamoyl moiety of threonylcarbamoyl-AMP (TC-AMP) to the N6 group of A37, together with TsaE and TsaB. TsaD likely plays a direct catalytic role in this reaction. This is tRNA N6-adenosine threonylcarbamoyltransferase from Thermotoga maritima (strain ATCC 43589 / DSM 3109 / JCM 10099 / NBRC 100826 / MSB8).